Consider the following 979-residue polypeptide: Receptor-type tyrosine-protein phosphatase-like N (979 aa).

Residues 1 to 34 form the signal peptide; the sequence is MRLPGRPGGPGGSGGLRVLLCLLLLGSRPGGCNA. The tract at residues 35–131 is RESP18 homology domain; it reads ISAHGCLFDR…HPRDRSGLVP (97 aa). The Lumenal portion of the chain corresponds to 35 to 575; it reads ISAHGCLFDR…RPAHSTSPMR (541 aa). An intrachain disulfide couples cysteine 53 to cysteine 62. Residues 113–127 are compositionally biased toward basic and acidic residues; it reads IPRLRPPEPHPRDRS. 4 disordered regions span residues 113-171, 248-272, 285-332, and 391-466; these read IPRL…GAGS, GSKG…PAQL, SQVP…EQPD, and EQVQ…STRP. Phosphoserine occurs at positions 308 and 309. The segment covering 400–409 has biased composition (pro residues); the sequence is EPPPPMPSLP. Residues 449–575 are sufficient for dimerization of proICA512; the sequence is SPLGQNQPTM…RPAHSTSPMR (127 aa). Over residues 451-466 the composition is skewed to polar residues; the sequence is LGQNQPTMAGQPSTRP. 2 N-linked (GlcNAc...) asparagine glycosylation sites follow: asparagine 506 and asparagine 524. The helical transmembrane segment at 576–600 threads the bilayer; it reads SVLLTLVALAGVAGLLVALAVALCV. The interval 601–732 is sufficient for dimerization of proICA512; that stretch reads RQHARQRDKE…PNTCATAQGE (132 aa). The Cytoplasmic portion of the chain corresponds to 601–979; it reads RQHARQRDKE…VNAILKALPQ (379 aa). Positions 643 to 680 are disordered; the sequence is NRAEGPPEPSRVSSVSSQFSDAAQASPSSHSSTPSWCE. The span at 652 to 677 shows a compositional bias: low complexity; it reads SRVSSVSSQFSDAAQASPSSHSSTPS. The Tyrosine-protein phosphatase domain maps to 709–969; that stretch reads LAKEWQALCA…EFALTAVAEE (261 aa). Lysine 754 participates in a covalent cross-link: Glycyl lysine isopeptide (Lys-Gly) (interchain with G-Cter in SUMO).

The protein belongs to the protein-tyrosine phosphatase family. Receptor class 8 subfamily. In terms of assembly, homodimer; shown for the unprocessed protein (proICA512) in the endoplasmic reticulum and resolved during protein maturation as ICA512-TMF seems to be predominantly monomeric in secretory granules; however, ICA512-CCF interacts with ICA512-TMF disrupting the ICA512-TMF:SNTB2 complex. The isolated lumenal RESP18 homology domain has been shown to form disulfide-linked homooligomers. Interacts (via cytoplasmic domain) with phosphorylated SNTB2; this protects PTPRN against cleavage by CAPN1 to produce ICA512-CCF. Dephosphorylation of SNTB2 upon insulin stimulation disrupts the interaction and results in PTPRN cleavage. Interacts with SNX19. ICA512-CCF interacts with PIAS4; in the nucleus. Interacts with STAT5B (phosphorylated); down-regulated by ICA512-CCF sumoylation; ICA512-CCF prevents STAT5B dephosphorylation; ICA512-CCF mediates interaction of STAT5B with PIAS4. Interacts (via RESP18 homology domain) with insulin and proinsulin. Interacts with PTPRN2, PTPRA and PTPRE. Post-translationally, N-glycosylated. O-glycosylated. In terms of processing, subject to proteolytic cleavage at multiple sites. Subject to cleavage on a pair of basic residues. On exocytosis of secretory granules in pancreatic beta-cells ICA512-TMF is transiently inserted in the plasma-membrane and cleaved by mu-type calpain CPN1 to yield ICA512-CCF. Post-translationally, sumoylated at two sites including Lys-754. Sumoylation decreases interaction with STAT5. Detected in pituitary (at protein level).

It is found in the membrane. The protein resides in the cytoplasmic vesicle. Its subcellular location is the secretory vesicle membrane. The protein localises to the perikaryon. It localises to the cell projection. It is found in the axon. The protein resides in the synapse. Its subcellular location is the cell membrane. The protein localises to the endosome. It localises to the nucleus. Plays a role in vesicle-mediated secretory processes. Required for normal accumulation of secretory vesicles in hippocampus, pituitary and pancreatic islets. Required for the accumulation of normal levels of insulin-containing vesicles and preventing their degradation. Plays a role in insulin secretion in response to glucose stimuli. Required for normal accumulation of the neurotransmitters norepinephrine, dopamine and serotonin in the brain. In females, but not in males, required for normal accumulation and secretion of pituitary hormones, such as luteinizing hormone (LH) and follicle-stimulating hormone (FSH). Required to maintain normal levels of renin expression and renin release. Seems to lack intrinsic enzyme activity. May regulate catalytic active protein-tyrosine phosphatases such as PTPRA through dimerization. Its function is as follows. ICA512-TMF regulates dynamics and exocytosis of insulin secretory granules (SGs); binding of ICA512-TMF to SNTB2/beta-2-syntrophin is proposed to restrain SGs mobility and exocytosis by tethering them to the actin cytoskeleton depending on UTRN; the function is inhibited by cytoplasmic ICA512-CFF dimerizing with ICA512-TMF and displacing SNTB2. Functionally, ICA512-CCF translocated to the nucleus promotes expression of insulin and other granule-related genes; the function implicates binding to and regulating activity of STAT5B probably by preventing its dephosphorylation and potentially by inducing its sumoylation by recruiting PIAS4. Enhances pancreatic beta-cell proliferation by converging with signaling by STAT5B and STAT3. ICA512-CCF located in the cytoplasm regulates dynamics and exocytosis of insulin secretory granules (SGs) by dimerizing with ICA512-TMF and displacing SNTB2 thus enhancing SGs mobility and exocytosis. The protein is Receptor-type tyrosine-protein phosphatase-like N (PTPRN) of Bos taurus (Bovine).